The chain runs to 208 residues: 2-phospho-L-lactate guanylyltransferase (208 aa).

Belongs to the CofC family. Homodimer.

The enzyme catalyses (2S)-2-phospholactate + GTP + H(+) = (2S)-lactyl-2-diphospho-5'-guanosine + diphosphate. It participates in cofactor biosynthesis; coenzyme F420 biosynthesis. In terms of biological role, guanylyltransferase that catalyzes the activation of (2S)-2-phospholactate (2-PL) as (2S)-lactyl-2-diphospho-5'-guanosine, via the condensation of 2-PL with GTP. It is involved in the biosynthesis of coenzyme F420, a hydride carrier cofactor. The protein is 2-phospho-L-lactate guanylyltransferase of Haloarcula marismortui (strain ATCC 43049 / DSM 3752 / JCM 8966 / VKM B-1809) (Halobacterium marismortui).